Here is an 89-residue protein sequence, read N- to C-terminus: MITVWPQYLDKNLSLNEGRKVSKEIAVEEPKLQDIEKALKRLNLPYSTQKERSYPGKWYEKSGRILVESDKPKLELLKEISLKLQEIKQ.

The protein belongs to the SRP19 family. Part of the signal recognition particle protein translocation system, which is composed of SRP and FtsY. Archaeal SRP consists of a 7S RNA molecule of 300 nucleotides and two protein subunits: SRP54 and SRP19.

It localises to the cytoplasm. Its function is as follows. Involved in targeting and insertion of nascent membrane proteins into the cytoplasmic membrane. Binds directly to 7S RNA and mediates binding of the 54 kDa subunit of the SRP. The protein is Signal recognition particle 19 kDa protein of Methanobrevibacter smithii (strain ATCC 35061 / DSM 861 / OCM 144 / PS).